We begin with the raw amino-acid sequence, 102 residues long: Small ribosomal subunit protein uS10 (102 aa).

It belongs to the universal ribosomal protein uS10 family. In terms of assembly, part of the 30S ribosomal subunit.

Functionally, involved in the binding of tRNA to the ribosomes. This is Small ribosomal subunit protein uS10 from Moorella thermoacetica (strain ATCC 39073 / JCM 9320).